A 214-amino-acid polypeptide reads, in one-letter code: tRNA (guanine-N(7)-)-methyltransferase (214 aa).

E44, E69, D96, and D118 together coordinate S-adenosyl-L-methionine. D118 is a catalytic residue. Residues K122, D154, and 191 to 194 (TEYE) contribute to the substrate site.

Belongs to the class I-like SAM-binding methyltransferase superfamily. TrmB family.

The catalysed reaction is guanosine(46) in tRNA + S-adenosyl-L-methionine = N(7)-methylguanosine(46) in tRNA + S-adenosyl-L-homocysteine. It functions in the pathway tRNA modification; N(7)-methylguanine-tRNA biosynthesis. Its function is as follows. Catalyzes the formation of N(7)-methylguanine at position 46 (m7G46) in tRNA. The chain is tRNA (guanine-N(7)-)-methyltransferase from Listeria monocytogenes serotype 4a (strain HCC23).